The following is a 205-amino-acid chain: MVNLAAMVWRRLLRKRWVLALVFGLSLVYFLSSTFKQEERAVRDRNLLQVHDHNQPIPWKVQFNLGNSSRPSNQCRNSIQGKHLITDELGYVCERKDLLVNGCCNVNVPSTKQYCCDGCWPNGCCSAYEYCVSCCLQPNKQLLLERFLNRAAVAFQNLFMAVEDHFELCLAKCRTSSQSVQHENTYRDPIAKYCYGESPPELFPA.

The Cytoplasmic portion of the chain corresponds to 1–16 (MVNLAAMVWRRLLRKR). The chain crosses the membrane as a helical span at residues 17-35 (WVLALVFGLSLVYFLSSTF). Residues 36–205 (KQEERAVRDR…GESPPELFPA (170 aa)) lie on the Lumenal side of the membrane. Asn-67 is a glycosylation site (N-linked (GlcNAc...) asparagine).

This sequence belongs to the SPRING family. In terms of assembly, interacts with SCAP.

It localises to the golgi apparatus membrane. In terms of biological role, positively regulates hepatic SREBP signaling pathway by modulating the proper localization of SCAP (SREBP cleavage-activating protein) to the endoplasmic reticulum, thereby controlling the level of functional SCAP. This chain is SREBP regulating gene protein, found in Homo sapiens (Human).